We begin with the raw amino-acid sequence, 601 residues long: Adenine deaminase (601 aa).

The protein belongs to the metallo-dependent hydrolases superfamily. Adenine deaminase family. Mn(2+) serves as cofactor.

The enzyme catalyses adenine + H2O + H(+) = hypoxanthine + NH4(+). This chain is Adenine deaminase, found in Ruegeria sp. (strain TM1040) (Silicibacter sp.).